We begin with the raw amino-acid sequence, 115 residues long: Large ribosomal subunit protein bL20 (115 aa).

This sequence belongs to the bacterial ribosomal protein bL20 family.

Functionally, binds directly to 23S ribosomal RNA and is necessary for the in vitro assembly process of the 50S ribosomal subunit. It is not involved in the protein synthesizing functions of that subunit. This chain is Large ribosomal subunit protein bL20, found in Prochlorococcus marinus (strain MIT 9312).